The chain runs to 359 residues: NF-kappa-B inhibitor beta (359 aa).

Phosphoserine; by RPS6KA1 is present on residues S19 and S23. 3 ANK repeats span residues 57–86 (DGDT…GTEY), 93–122 (LGQT…GVLV), and 126–155 (GGHT…SHPR). Residues 153–194 (HPRDASDTYLTQSQDCTPDTSHAPAAVDSQPNPENEEEPRDE) form a disordered region. The segment covering 160–172 (TYLTQSQDCTPDT) has biased composition (polar residues). ANK repeat units follow at residues 206–235 (DGHT…DLNK), 240–269 (CGRT…DPTA), and 273–302 (GGRT…PEPE). The segment at 298–359 (APEPEDEDDK…KPLPDDPNPA (62 aa)) is disordered. Phosphoserine occurs at positions 313 and 318. The segment covering 318 to 331 (SDSDNRDEGDEYDD) has biased composition (acidic residues). The segment covering 344–359 (PPSPASKPLPDDPNPA) has biased composition (pro residues).

Belongs to the NF-kappa-B inhibitor family. Interacts with THRB (via ligand-binding domain). Interacts with RELA and REL. Interacts with COMMD1. Interacts with inhibitor kappa B-interacting Ras-like NKIRAS1 and NKIRAS2. In terms of processing, phosphorylated by RPS6KA1; followed by degradation. Interaction with NKIRAS1 and NKIRAS2 probably prevents phosphorylation. Highly expressed in testis followed by spleen.

It localises to the cytoplasm. It is found in the nucleus. In terms of biological role, inhibits NF-kappa-B by complexing with and trapping it in the cytoplasm. However, the unphosphorylated form resynthesized after cell stimulation is able to bind NF-kappa-B allowing its transport to the nucleus and protecting it to further NFKBIA-dependent inactivation. Association with inhibitor kappa B-interacting NKIRAS1 and NKIRAS2 prevent its phosphorylation rendering it more resistant to degradation, explaining its slower degradation. The polypeptide is NF-kappa-B inhibitor beta (Nfkbib) (Mus musculus (Mouse)).